Reading from the N-terminus, the 378-residue chain is Cytochrome b (378 aa).

The next 4 membrane-spanning stretches (helical) occupy residues 34–54, 78–100, 113–133, and 179–199; these read FGSLLGLCLVIQILSGLFLSM, WLLRSIHANGASFFFMCLYCHIG, TWNVGVVIFFLTMGTAFVGYV, and FFSFHFLFPFMIAGLSMVHLL. Residues histidine 84 and histidine 98 each coordinate heme b. Heme b-binding residues include histidine 183 and histidine 197. Residue histidine 202 participates in a ubiquinone binding. 4 helical membrane passes run 225–245, 289–306, 313–342, and 350–369; these read YSTKDIAGFLVFFFVFFIVVL, LGGVVSLVASIAILFCLP, KFRSLVFYPLNQILFWSFCSIFLLLTWIGM, and IFIGQILTVLYFSYFLLNPL.

It belongs to the cytochrome b family. As to quaternary structure, the main subunits of complex b-c1 are: cytochrome b, cytochrome c1 and the Rieske protein. Requires heme b as cofactor.

It is found in the mitochondrion inner membrane. In terms of biological role, component of the ubiquinol-cytochrome c reductase complex (complex III or cytochrome b-c1 complex) that is part of the mitochondrial respiratory chain. The b-c1 complex mediates electron transfer from ubiquinol to cytochrome c. Contributes to the generation of a proton gradient across the mitochondrial membrane that is then used for ATP synthesis. The polypeptide is Cytochrome b (mt:Cyt-b) (Loxocorone allax (Goblet worm)).